A 257-amino-acid polypeptide reads, in one-letter code: Deoxyribose-phosphate aldolase (257 aa).

The active-site Proton donor/acceptor is aspartate 102. The active-site Schiff-base intermediate with acetaldehyde is the lysine 166. The active-site Proton donor/acceptor is lysine 198.

Belongs to the DeoC/FbaB aldolase family. DeoC type 2 subfamily.

It localises to the cytoplasm. The catalysed reaction is 2-deoxy-D-ribose 5-phosphate = D-glyceraldehyde 3-phosphate + acetaldehyde. Its pathway is carbohydrate degradation; 2-deoxy-D-ribose 1-phosphate degradation; D-glyceraldehyde 3-phosphate and acetaldehyde from 2-deoxy-alpha-D-ribose 1-phosphate: step 2/2. Catalyzes a reversible aldol reaction between acetaldehyde and D-glyceraldehyde 3-phosphate to generate 2-deoxy-D-ribose 5-phosphate. The chain is Deoxyribose-phosphate aldolase from Aeromonas hydrophila subsp. hydrophila (strain ATCC 7966 / DSM 30187 / BCRC 13018 / CCUG 14551 / JCM 1027 / KCTC 2358 / NCIMB 9240 / NCTC 8049).